The following is a 247-amino-acid chain: MRKVFETVVGLNPNFSFRGKQQTRIETFSDAVFALAITLLVLSSTIPETFEDLWASMRDVIPFAICVALIIVIWYQHYIFFLKYGLQDKVTILLNTILLFVLLVYVYPLKFLARFLSEIYGGIFGIIETDLSRFGEYSHQNLKLLMVNYGLGAFAIFLVFSLMYWRAYKMKSLLDLNSYEIFDTKSSIIANLLMCSVPLLSLIITLIDPWGNFRTTILSGFLYFLYVPIMIVFGRITSKKSRRLLQD.

Helical transmembrane passes span 23–44, 56–78, 89–117, 142–165, 187–210, and 215–237; these read TRIETFSDAVFALAITLLVLSS, SMRDVIPFAICVALIIVIWYQHY, KVTILLNTILLFVLLVYVYPLKFLARFLS, LKLLMVNYGLGAFAIFLVFSLMYW, SIIANLLMCSVPLLSLIITLIDPW, and TTILSGFLYFLYVPIMIVFGRIT. Positions 24-30 match the RxxxFSD motif motif; sequence RIETFSD.

Belongs to the TMEM175 family. As to quaternary structure, homotetramer.

Its subcellular location is the cell membrane. The catalysed reaction is K(+)(in) = K(+)(out). Potassium channel; forms a potassium-permeable leak-like channel with weak selectivity for potassium. The channel is permeable for K(+), Rb(+) and Cs(+). This chain is Potassium channel Ftrac_2467, found in Marivirga tractuosa (strain ATCC 23168 / DSM 4126 / NBRC 15989 / NCIMB 1408 / VKM B-1430 / H-43) (Microscilla tractuosa).